A 214-amino-acid chain; its full sequence is Probable GTP-binding protein EngB (214 aa).

An EngB-type G domain is found at 22–194 (HLPEIAFAGR…WARIDALLEP (173 aa)). Residues 30–37 (GRSNVGKS), 57–61 (GRTQL), 75–78 (DLPG), 142–145 (TKCD), and 173–175 (FSA) each bind GTP. Mg(2+)-binding residues include S37 and T59. Residues 195-214 (TAAETPGIPEEPAPPGPVND) form a disordered region. Residues 203 to 214 (PEEPAPPGPVND) are compositionally biased toward pro residues.

The protein belongs to the TRAFAC class TrmE-Era-EngA-EngB-Septin-like GTPase superfamily. EngB GTPase family. Mg(2+) serves as cofactor.

Functionally, necessary for normal cell division and for the maintenance of normal septation. The chain is Probable GTP-binding protein EngB from Geobacter sp. (strain M21).